A 114-amino-acid chain; its full sequence is Beta-microseminoprotein (114 aa).

The signal sequence occupies residues 1-20 (MNVLLGGFVIFATFVTLCNA). Cystine bridges form between Cys22/Cys70, Cys38/Cys62, Cys57/Cys93, Cys60/Cys69, and Cys84/Cys107.

This sequence belongs to the beta-microseminoprotein family. Homodimer; Interacts with PI16.

The protein localises to the secreted. This is Beta-microseminoprotein (MSMB) from Macaca mulatta (Rhesus macaque).